Consider the following 464-residue polypeptide: Fumarate hydratase class II (464 aa).

Residues 98–100 (SGT), 129–132 (HPND), 139–141 (SSN), and Thr187 each bind substrate. His188 serves as the catalytic Proton donor/acceptor. Ser318 is a catalytic residue. Substrate is bound by residues Ser319 and 324–326 (KVN).

Belongs to the class-II fumarase/aspartase family. Fumarase subfamily. In terms of assembly, homotetramer.

It localises to the cytoplasm. It catalyses the reaction (S)-malate = fumarate + H2O. It participates in carbohydrate metabolism; tricarboxylic acid cycle; (S)-malate from fumarate: step 1/1. Functionally, involved in the TCA cycle. Catalyzes the stereospecific interconversion of fumarate to L-malate. In Wigglesworthia glossinidia brevipalpis, this protein is Fumarate hydratase class II.